Consider the following 57-residue polypeptide: Small ribosomal subunit protein bS21 (57 aa).

This sequence belongs to the bacterial ribosomal protein bS21 family.

This Bacillus anthracis (strain A0248) protein is Small ribosomal subunit protein bS21.